The primary structure comprises 761 residues: Polyribonucleotide nucleotidyltransferase (761 aa).

Aspartate 532 and aspartate 538 together coordinate Mg(2+). Residues 598 to 657 (PRVISVQIPVDKIGELIGPKGKTINAIQDETGADISIDEDGTVYIGAVDGPSAEAARAQV) form the KH domain. Residues 669 to 741 (GEQFLGTVVK…DRGKLSLAPV (73 aa)) enclose the S1 motif domain.

It belongs to the polyribonucleotide nucleotidyltransferase family. Mg(2+) is required as a cofactor.

Its subcellular location is the cytoplasm. The catalysed reaction is RNA(n+1) + phosphate = RNA(n) + a ribonucleoside 5'-diphosphate. In terms of biological role, involved in mRNA degradation. Catalyzes the phosphorolysis of single-stranded polyribonucleotides processively in the 3'- to 5'-direction. The chain is Polyribonucleotide nucleotidyltransferase from Leifsonia xyli subsp. xyli (strain CTCB07).